Reading from the N-terminus, the 686-residue chain is Potassium-transporting ATPase ATP-binding subunit 2 (686 aa).

4 helical membrane-spanning segments follow: residues 37 to 57 (MFVV…PNLF), 64 to 84 (MILY…FANF), 223 to 243 (LLVS…PMAI), and 255 to 275 (VALT…AIGI). Aspartate 306 (4-aspartylphosphate intermediate) is an active-site residue. Residues aspartate 343, glutamate 347, 376–383 (FTAQTRMS), and lysine 395 each bind ATP. 2 residues coordinate Mg(2+): aspartate 518 and aspartate 522. The next 3 membrane-spanning stretches (helical) occupy residues 588 to 608 (FAII…LNIM), 616 to 636 (AILS…PLAM), and 656 to 676 (VYGV…DLVI).

This sequence belongs to the cation transport ATPase (P-type) (TC 3.A.3) family. Type IA subfamily. The system is composed of three essential subunits: KdpA, KdpB and KdpC.

The protein resides in the cell membrane. The enzyme catalyses K(+)(out) + ATP + H2O = K(+)(in) + ADP + phosphate + H(+). Its function is as follows. Part of the high-affinity ATP-driven potassium transport (or Kdp) system, which catalyzes the hydrolysis of ATP coupled with the electrogenic transport of potassium into the cytoplasm. This subunit is responsible for energy coupling to the transport system and for the release of the potassium ions to the cytoplasm. This Listeria innocua serovar 6a (strain ATCC BAA-680 / CLIP 11262) protein is Potassium-transporting ATPase ATP-binding subunit 2.